The primary structure comprises 126 residues: Holo-[acyl-carrier-protein] synthase (126 aa).

Asp-9 and Glu-58 together coordinate Mg(2+).

It belongs to the P-Pant transferase superfamily. AcpS family. It depends on Mg(2+) as a cofactor.

It is found in the cytoplasm. The enzyme catalyses apo-[ACP] + CoA = holo-[ACP] + adenosine 3',5'-bisphosphate + H(+). Its function is as follows. Transfers the 4'-phosphopantetheine moiety from coenzyme A to a Ser of acyl-carrier-protein. The sequence is that of Holo-[acyl-carrier-protein] synthase from Shewanella frigidimarina (strain NCIMB 400).